The primary structure comprises 176 residues: HTH-type transcriptional regulator DctR (176 aa).

The region spanning 109–174 (VPEANVSLSR…ELVRHQHIDY (66 aa)) is the HTH luxR-type domain. Residues 133-152 (TEDILEKLKISLKTFYCHKH) constitute a DNA-binding region (H-T-H motif).

Functionally, may act as a transcriptional regulator of dctA. The sequence is that of HTH-type transcriptional regulator DctR (dctR) from Shigella flexneri.